Reading from the N-terminus, the 304-residue chain is Voltage-dependent anion channel-forming protein YneE (304 aa).

4 consecutive transmembrane segments (helical) span residues 28-48 (LLLNFLFSIAVIFMLPWYTHL), 50-70 (IKFTLAPFSILGVAIAIFLGF), 194-214 (VLAGCERIAYTPIPFAYTLIL), and 220-240 (LFCIMLPFALVVDLHYMTPFI).

It belongs to the anion channel-forming bestrophin (TC 1.A.46) family.

The protein resides in the cell membrane. The sequence is that of Voltage-dependent anion channel-forming protein YneE (yneE) from Escherichia coli O157:H7.